Reading from the N-terminus, the 424-residue chain is Homeobox even-skipped homolog protein 2 (424 aa).

Disordered regions lie at residues 18-65 and 132-178; these read PAGK…DTPT and TTQL…GPDQ. Polar residues-rich tracts occupy residues 50–65 and 132–145; these read RPTSASLHNTVGDTPT and TTQLKENTNKVYSD. A compositionally biased stretch (low complexity) spans 146–175; the sequence is NGSSTNTSSNGSNITNLNGNSSSIGNSGSG. Positions 179-238 form a DNA-binding region, homeobox; sequence VRRYRTAFTREQIGRLEKEFYRENYVSRPRRCELAAALNLPETTIKVWFQNRRMKDKRQR.

It belongs to the even-skipped homeobox family.

The protein resides in the nucleus. The sequence is that of Homeobox even-skipped homolog protein 2 (EVX2) from Heterodontus francisci (Horn shark).